The chain runs to 234 residues: Biosynthetic peptidoglycan transglycosylase (234 aa).

Residues 11–31 traverse the membrane as a helical segment; the sequence is RFLLFAMLGFVGLSVLLVLVF.

This sequence belongs to the glycosyltransferase 51 family.

The protein localises to the cell inner membrane. The enzyme catalyses [GlcNAc-(1-&gt;4)-Mur2Ac(oyl-L-Ala-gamma-D-Glu-L-Lys-D-Ala-D-Ala)](n)-di-trans,octa-cis-undecaprenyl diphosphate + beta-D-GlcNAc-(1-&gt;4)-Mur2Ac(oyl-L-Ala-gamma-D-Glu-L-Lys-D-Ala-D-Ala)-di-trans,octa-cis-undecaprenyl diphosphate = [GlcNAc-(1-&gt;4)-Mur2Ac(oyl-L-Ala-gamma-D-Glu-L-Lys-D-Ala-D-Ala)](n+1)-di-trans,octa-cis-undecaprenyl diphosphate + di-trans,octa-cis-undecaprenyl diphosphate + H(+). It functions in the pathway cell wall biogenesis; peptidoglycan biosynthesis. Its function is as follows. Peptidoglycan polymerase that catalyzes glycan chain elongation from lipid-linked precursors. The polypeptide is Biosynthetic peptidoglycan transglycosylase (Chromohalobacter salexigens (strain ATCC BAA-138 / DSM 3043 / CIP 106854 / NCIMB 13768 / 1H11)).